Reading from the N-terminus, the 259-residue chain is Phosphoribosylaminoimidazole-succinocarboxamide synthase (259 aa).

It belongs to the SAICAR synthetase family.

It catalyses the reaction 5-amino-1-(5-phospho-D-ribosyl)imidazole-4-carboxylate + L-aspartate + ATP = (2S)-2-[5-amino-1-(5-phospho-beta-D-ribosyl)imidazole-4-carboxamido]succinate + ADP + phosphate + 2 H(+). The protein operates within purine metabolism; IMP biosynthesis via de novo pathway; 5-amino-1-(5-phospho-D-ribosyl)imidazole-4-carboxamide from 5-amino-1-(5-phospho-D-ribosyl)imidazole-4-carboxylate: step 1/2. The polypeptide is Phosphoribosylaminoimidazole-succinocarboxamide synthase (Hyphomonas neptunium (strain ATCC 15444)).